The sequence spans 223 residues: Gastrula zinc finger protein XlCGF52.1 (223 aa).

C2H2-type zinc fingers lie at residues 6–27 (FTCP…TEDH), 33–55 (FTCM…QRVH), 61–83 (YTCT…ISTH), 89–111 (FPCT…QRIH), 117–139 (FQCL…QRSH), 145–167 (YACS…ERIH), 173–195 (YECN…QKIH), and 201–223 (FTCT…QKIH).

This sequence belongs to the krueppel C2H2-type zinc-finger protein family.

The protein resides in the nucleus. In terms of biological role, may be involved in transcriptional regulation. The polypeptide is Gastrula zinc finger protein XlCGF52.1 (Xenopus laevis (African clawed frog)).